The primary structure comprises 363 residues: Exopolygalacturonase rpg13 (363 aa).

The N-terminal stretch at 1–26 is a signal peptide; that stretch reads MVKFLSLTSSVTALLLLSLGANGVAA. Residues Asn121, Asn142, and Asn150 are each glycosylated (N-linked (GlcNAc...) asparagine). 5 PbH1 repeats span residues 143-173, 174-195, 197-217, 227-248, and 256-277; these read ATDV…DVSR, SSNV…AINE, VTNV…SVGS, VKTV…RIKT, and VSDI…LITT. Asp188 serves as the catalytic Proton donor. The cysteines at positions 190 and 207 are disulfide-linked. Asn199 carries an N-linked (GlcNAc...) asparagine glycan. The active site involves His211. Asn321 carries N-linked (GlcNAc...) asparagine glycosylation. Cys322 and Cys328 form a disulfide bridge. One copy of the PbH1 6 repeat lies at 328-354; the sequence is CTDFTLSGVKITKASNTPKNVCVNLDG.

This sequence belongs to the glycosyl hydrolase 28 family. In terms of processing, N-glycosylated.

It localises to the secreted. It catalyses the reaction [(1-&gt;4)-alpha-D-galacturonosyl](n) + H2O = alpha-D-galacturonate + [(1-&gt;4)-alpha-D-galacturonosyl](n-1). Specific in hydrolyzing the terminal glycosidic bond of polygalacturonic acid and oligogalacturonates. Has no activity towards trigalacturonic acid. The polypeptide is Exopolygalacturonase rpg13 (Rhizopus delemar (strain RA 99-880 / ATCC MYA-4621 / FGSC 9543 / NRRL 43880) (Mucormycosis agent)).